The following is a 435-amino-acid chain: 5-methylthioadenosine/S-adenosylhomocysteine deaminase (435 aa).

H65 and H67 together coordinate Zn(2+). Substrate-binding residues include E94, R150, and H189. Zn(2+) is bound at residue H216. Residues E219 and D304 each coordinate substrate. D304 is a Zn(2+) binding site.

The protein belongs to the metallo-dependent hydrolases superfamily. MTA/SAH deaminase family. The cofactor is Zn(2+).

It carries out the reaction S-adenosyl-L-homocysteine + H2O + H(+) = S-inosyl-L-homocysteine + NH4(+). It catalyses the reaction S-methyl-5'-thioadenosine + H2O + H(+) = S-methyl-5'-thioinosine + NH4(+). Its function is as follows. Catalyzes the deamination of 5-methylthioadenosine and S-adenosyl-L-homocysteine into 5-methylthioinosine and S-inosyl-L-homocysteine, respectively. Is also able to deaminate adenosine. The chain is 5-methylthioadenosine/S-adenosylhomocysteine deaminase from Bacillus cereus (strain G9842).